A 208-amino-acid chain; its full sequence is LysM and putative peptidoglycan-binding domain-containing protein 2 (208 aa).

The interval 1–54 (MAEFSPVLPPLRDDGGGGRYGQPLFPRSRSGSESDSELSQSLARTKTRSYGSTA) is disordered. Residues 27 to 42 (RSRSGSESDSELSQSL) are compositionally biased toward low complexity. The LysM domain occupies 65 to 109 (IEHRVTDGETLQGIALKYGVTMEQIKRVNKLFSNDCIFLRNTLSI). 2 disordered regions span residues 122 to 169 (LSLE…EELS) and 187 to 208 (AARK…YQEI). The segment covering 129–140 (SEGNTPQESPCV) has biased composition (polar residues). Residues 147–156 (PSPPPEPSVP) show a composition bias toward pro residues.

In Danio rerio (Zebrafish), this protein is LysM and putative peptidoglycan-binding domain-containing protein 2 (lysmd2).